Consider the following 160-residue polypeptide: Aspartate carbamoyltransferase regulatory chain (160 aa).

4 residues coordinate Zn(2+): C110, C115, C140, and C143.

It belongs to the PyrI family. In terms of assembly, contains catalytic and regulatory chains. It depends on Zn(2+) as a cofactor.

Involved in allosteric regulation of aspartate carbamoyltransferase. This chain is Aspartate carbamoyltransferase regulatory chain, found in Hyperthermus butylicus (strain DSM 5456 / JCM 9403 / PLM1-5).